The sequence spans 150 residues: HTH-type transcriptional regulator LrpA (150 aa).

Positions 5–66 (LDDIDRILVR…RINPEAVGHL (62 aa)) constitute an HTH asnC-type domain. The segment at residues 24 to 43 (LSELATRAGLSVSAVQSRVR) is a DNA-binding region (H-T-H motif). The L-phenylalanine site is built by V100, G102, and E104.

In terms of assembly, homohexadecamer in the absence of any added ligand. Homooctamer. Tetramer of dimers. In the presence of phenylalanine, the hexadecamer dissociates into an octamer, which further dissociates partially into lower-order oligomers.

The DNA-binding activity of LrpA is modulated by interaction of LrpA with various effector molecules, including amino acids and vitamins. The DNA binding affinity is decreased by several amino acids, including phenylalanine, tyrosine, tryptophan, histidine, leucine and aspartate. Preferentially binds to aromatic amino acids. Besides amino acids, the binding affinity is also reduced by vitamins, including B1, B3, B6, VC, B7, B9, B12, VA and VK3. Transcriptional regulator that probably plays an important role in M.tuberculosis persistence. Regulates the expression of several genes, including lat, rsmG, whiB2, lsr2 and Rv2011c. Acts by binding directly to the promoter region of the target genes. The chain is HTH-type transcriptional regulator LrpA from Mycobacterium tuberculosis (strain ATCC 25618 / H37Rv).